The sequence spans 451 residues: Ubiquinone biosynthesis monooxygenase COQ6, mitochondrial (451 aa).

This sequence belongs to the UbiH/COQ6 family. In terms of assembly, component of a multi-subunit COQ enzyme complex. It depends on FAD as a cofactor.

It localises to the mitochondrion inner membrane. It catalyses the reaction a 4-hydroxy-3-(all-trans-polyprenyl)benzoate + 2 reduced [2Fe-2S]-[ferredoxin] + O2 + 2 H(+) = a 3,4-dihydroxy-5-(all-trans-polyprenyl)benzoate + 2 oxidized [2Fe-2S]-[ferredoxin] + H2O. It carries out the reaction a 2-methoxy-6-(all-trans-polyprenyl)phenol + 2 reduced [2Fe-2S]-[ferredoxin] + O2 + 2 H(+) = a 2-methoxy-6-(all-trans-polyprenyl)benzene-1,4-diol + 2 oxidized [2Fe-2S]-[ferredoxin] + H2O. Its pathway is cofactor biosynthesis; ubiquinone biosynthesis. In terms of biological role, FAD-dependent monooxygenase required for two non-consecutive steps during ubiquinone biosynthesis. Required for the C5-ring hydroxylation during ubiquinone biosynthesis by catalyzing the hydroxylation of 4-hydroxy-3-(all-trans-polyprenyl)benzoic acid to 3,4-dihydroxy-5-(all-trans-polyprenyl)benzoic acid. Also acts downstream of coq4, for the C1-hydroxylation during ubiquinone biosynthesis by catalyzing the hydroxylation of 2-methoxy-6-(all-trans-polyprenyl)phenol to 2-methoxy-6-(all-trans-polyprenyl)benzene-1,4-diol. The electrons required for the hydroxylation reaction are funneled indirectly to coq-6 from NADPH via a ferredoxin/ferredoxin reductase system. In Caenorhabditis elegans, this protein is Ubiquinone biosynthesis monooxygenase COQ6, mitochondrial.